The following is a 178-amino-acid chain: Cytochrome b6-f complex iron-sulfur subunit 3 (178 aa).

A helical membrane pass occupies residues 20–42; it reads FITGATVAVTAGAALYPAGKFLI. In terms of domain architecture, Rieske spans 65 to 161; it reads PASQILAEPP…VAVIDNSILI (97 aa). Positions 107, 109, 125, and 128 each coordinate [2Fe-2S] cluster. A disulfide bridge connects residues Cys112 and Cys127.

The protein belongs to the Rieske iron-sulfur protein family. The 4 large subunits of the cytochrome b6-f complex are cytochrome b6, subunit IV (17 kDa polypeptide, PetD), cytochrome f and the Rieske protein, while the 4 small subunits are PetG, PetL, PetM and PetN. The complex functions as a dimer. The cofactor is [2Fe-2S] cluster.

It localises to the cellular thylakoid membrane. The catalysed reaction is 2 oxidized [plastocyanin] + a plastoquinol + 2 H(+)(in) = 2 reduced [plastocyanin] + a plastoquinone + 4 H(+)(out). Component of the cytochrome b6-f complex, which mediates electron transfer between photosystem II (PSII) and photosystem I (PSI), cyclic electron flow around PSI, and state transitions. The polypeptide is Cytochrome b6-f complex iron-sulfur subunit 3 (Nostoc sp. (strain PCC 7120 / SAG 25.82 / UTEX 2576)).